We begin with the raw amino-acid sequence, 254 residues long: Probable phosphomannomutase (254 aa).

The active-site Nucleophile is the D14. Mg(2+)-binding residues include D14 and D16. D16 functions as the Proton donor/acceptor in the catalytic mechanism. Alpha-D-mannose 1-phosphate is bound by residues R23, R129, R140, R147, S185, and D187. 4 residues coordinate Mg(2+): D214, F226, D228, and T231.

Belongs to the eukaryotic PMM family. In terms of assembly, homodimer.

Its subcellular location is the cytoplasm. The catalysed reaction is alpha-D-mannose 1-phosphate = D-mannose 6-phosphate. It functions in the pathway nucleotide-sugar biosynthesis; GDP-alpha-D-mannose biosynthesis; alpha-D-mannose 1-phosphate from D-fructose 6-phosphate: step 2/2. Its function is as follows. Involved in the synthesis of the GDP-mannose and dolichol-phosphate-mannose required for a number of critical mannosyl transfer reactions. The chain is Probable phosphomannomutase from Caenorhabditis elegans.